A 140-amino-acid chain; its full sequence is MKRYTPDFPEMMRLCEMNFSQLRRLLPRNDAPGETVSYQVANAQYRLTIVESTRYTTLVTIEQTAPAISYWSLPSMTVRLYHDAMVAEVCSSQQIFRFKARYDYPNKKLHQRDEKHQINQFLADWLRYCLAHGAMAIPVY.

This is an uncharacterized protein from Escherichia coli O157:H7.